Here is an 833-residue protein sequence, read N- to C-terminus: Translation initiation factor IF-2 (833 aa).

A disordered region spans residues 1–247 (MTEDVKKADG…ALQQAFTKPA (247 aa)). Composition is skewed to basic and acidic residues over residues 53-99 (QKAE…EAKK) and 110-152 (VDVE…RYAE). Positions 153–166 (LSEEDAENENSEDY) are enriched in acidic residues. Residues 187-203 (KENRNRGGKNKVAKAKK) show a composition bias toward basic residues. Residues 204–227 (GGREDESSKTERESNRRNQKDGKM) show a composition bias toward basic and acidic residues. Residues 333 to 502 (TRAPVVTIMG…LLQSEVLELT (170 aa)) enclose the tr-type G domain. Positions 342–349 (GHVDHGKT) are G1. 342–349 (GHVDHGKT) is a binding site for GTP. The tract at residues 367–371 (GITQH) is G2. The interval 388–391 (DTPG) is G3. GTP-binding positions include 388–392 (DTPGH) and 442–445 (NKID). The G4 stretch occupies residues 442–445 (NKID). The tract at residues 478–480 (SAK) is G5.

The protein belongs to the TRAFAC class translation factor GTPase superfamily. Classic translation factor GTPase family. IF-2 subfamily.

The protein resides in the cytoplasm. Its function is as follows. One of the essential components for the initiation of protein synthesis. Protects formylmethionyl-tRNA from spontaneous hydrolysis and promotes its binding to the 30S ribosomal subunits. Also involved in the hydrolysis of GTP during the formation of the 70S ribosomal complex. The protein is Translation initiation factor IF-2 (infB) of Pasteurella multocida (strain Pm70).